A 156-amino-acid chain; its full sequence is Ribosome maturation factor RimP (156 aa).

This sequence belongs to the RimP family.

The protein localises to the cytoplasm. Functionally, required for maturation of 30S ribosomal subunits. The chain is Ribosome maturation factor RimP from Anoxybacillus flavithermus (strain DSM 21510 / WK1).